The primary structure comprises 130 residues: Protein CPn_0713/CP_0033/CPj0713/CpB0740 (130 aa).

This sequence belongs to the chlamydial CPn_0713/CT_663/TC_0034 family.

The protein is Protein CPn_0713/CP_0033/CPj0713/CpB0740 of Chlamydia pneumoniae (Chlamydophila pneumoniae).